A 68-amino-acid polypeptide reads, in one-letter code: DNA-directed RNA polymerase subunit Rpo10 (68 aa).

Residues Cys-7, Cys-10, Cys-44, and Cys-45 each contribute to the Zn(2+) site.

This sequence belongs to the archaeal Rpo10/eukaryotic RPB10 RNA polymerase subunit family. As to quaternary structure, part of the RNA polymerase complex. Zn(2+) serves as cofactor.

The protein localises to the cytoplasm. It catalyses the reaction RNA(n) + a ribonucleoside 5'-triphosphate = RNA(n+1) + diphosphate. In terms of biological role, DNA-dependent RNA polymerase (RNAP) catalyzes the transcription of DNA into RNA using the four ribonucleoside triphosphates as substrates. The polypeptide is DNA-directed RNA polymerase subunit Rpo10 (Methanococcus maripaludis (strain C7 / ATCC BAA-1331)).